The sequence spans 346 residues: Anthranilate phosphoribosyltransferase (346 aa).

5-phospho-alpha-D-ribose 1-diphosphate-binding positions include glycine 81, glycine 84 to aspartate 85, asparagine 91 to threonine 94, lysine 109 to serine 117, and serine 121. Glycine 81 provides a ligand contact to anthranilate. Serine 93 contributes to the Mg(2+) binding site. Asparagine 112 contacts anthranilate. Residue arginine 167 participates in anthranilate binding. Aspartate 226 and glutamate 227 together coordinate Mg(2+).

This sequence belongs to the anthranilate phosphoribosyltransferase family. Homodimer. Mg(2+) serves as cofactor.

The enzyme catalyses N-(5-phospho-beta-D-ribosyl)anthranilate + diphosphate = 5-phospho-alpha-D-ribose 1-diphosphate + anthranilate. It participates in amino-acid biosynthesis; L-tryptophan biosynthesis; L-tryptophan from chorismate: step 2/5. In terms of biological role, catalyzes the transfer of the phosphoribosyl group of 5-phosphorylribose-1-pyrophosphate (PRPP) to anthranilate to yield N-(5'-phosphoribosyl)-anthranilate (PRA). The protein is Anthranilate phosphoribosyltransferase of Hahella chejuensis (strain KCTC 2396).